A 352-amino-acid polypeptide reads, in one-letter code: Uroporphyrinogen decarboxylase (352 aa).

Substrate-binding positions include 26–30 (RQAGR), Asp76, Tyr153, Ser208, and His323.

It belongs to the uroporphyrinogen decarboxylase family. In terms of assembly, homodimer.

It is found in the cytoplasm. It carries out the reaction uroporphyrinogen III + 4 H(+) = coproporphyrinogen III + 4 CO2. Its pathway is porphyrin-containing compound metabolism; protoporphyrin-IX biosynthesis; coproporphyrinogen-III from 5-aminolevulinate: step 4/4. Functionally, catalyzes the decarboxylation of four acetate groups of uroporphyrinogen-III to yield coproporphyrinogen-III. This is Uroporphyrinogen decarboxylase from Synechococcus sp. (strain CC9902).